The sequence spans 582 residues: Hemagglutinin-neuraminidase (582 aa).

The Intravirion segment spans residues 1–34; that stretch reads MEPSKLFTMSDNATFAPGPVINAADKKTFRTCFR. The chain crosses the membrane as a helical; Signal-anchor for type II membrane protein span at residues 35 to 55; it reads ILVLSVQAVTLILVIVTLGEL. Over 56-582 the chain is Virion surface; it reads VRMINDQGLS…LPVLTRLTIT (527 aa). A glycan (N-linked (GlcNAc...) asparagine; by host) is linked at asparagine 127. Cystine bridges form between cysteine 178–cysteine 202, cysteine 192–cysteine 253, and cysteine 244–cysteine 257. Residues 240–245 form an involved in neuraminidase activity region; the sequence is NRKSCS. Asparagine 284 and asparagine 329 each carry an N-linked (GlcNAc...) asparagine; by host glycan. 3 disulfides stabilise this stretch: cysteine 350–cysteine 471, cysteine 382–cysteine 392, and cysteine 465–cysteine 475. Asparagine 400, asparagine 448, and asparagine 464 each carry an N-linked (GlcNAc...) asparagine; by host glycan. Asparagine 507 carries N-linked (GlcNAc...) asparagine; by host glycosylation. Cysteine 545 and cysteine 556 are joined by a disulfide.

This sequence belongs to the paramyxoviruses hemagglutinin-neuraminidase family. Homotetramer; composed of disulfide-linked homodimers. Interacts with F protein trimer.

The protein resides in the virion membrane. It localises to the host cell membrane. The catalysed reaction is Hydrolysis of alpha-(2-&gt;3)-, alpha-(2-&gt;6)-, alpha-(2-&gt;8)- glycosidic linkages of terminal sialic acid residues in oligosaccharides, glycoproteins, glycolipids, colominic acid and synthetic substrates.. Its function is as follows. Attaches the virus to alpha-2,3-linked sialic acid-containing cell receptors and thereby initiating infection. Binding of HN protein to the receptor induces a conformational change that allows the F protein to trigger virion/cell membranes fusion. Binds to the glycan motifs sialyl Lewis (SLe) and GM2 ganglioside (GM2-glycan). Functionally, neuraminidase (sialidase) activity ensures the efficient spread of the virus by dissociating the mature virions from the neuraminic acid containing glycoproteins. This is Hemagglutinin-neuraminidase (HN) from Mumps virus genotype B (strain Miyahara vaccine) (MuV).